The sequence spans 379 residues: DNA replication and repair protein RecF (379 aa).

ATP is bound at residue glycine 34–threonine 41.

This sequence belongs to the RecF family.

It is found in the cytoplasm. The RecF protein is involved in DNA metabolism; it is required for DNA replication and normal SOS inducibility. RecF binds preferentially to single-stranded, linear DNA. It also seems to bind ATP. This Mesorhizobium japonicum (strain LMG 29417 / CECT 9101 / MAFF 303099) (Mesorhizobium loti (strain MAFF 303099)) protein is DNA replication and repair protein RecF.